Reading from the N-terminus, the 60-residue chain is Large ribosomal subunit protein eL37 (60 aa).

Cys-19, Cys-22, Cys-34, and Cys-37 together coordinate Zn(2+). The C4-type zinc-finger motif lies at 19-37 (CRRCGRMSYHKRHKICSSC).

Belongs to the eukaryotic ribosomal protein eL37 family. The cofactor is Zn(2+).

Its function is as follows. Binds to the 23S rRNA. In Methanospirillum hungatei JF-1 (strain ATCC 27890 / DSM 864 / NBRC 100397 / JF-1), this protein is Large ribosomal subunit protein eL37.